The following is a 131-amino-acid chain: Aspartate 1-decarboxylase (131 aa).

S25 (schiff-base intermediate with substrate; via pyruvic acid) is an active-site residue. Residue S25 is modified to Pyruvic acid (Ser). Substrate is bound at residue T57. Y58 (proton donor) is an active-site residue. 73-75 (GAA) lines the substrate pocket.

The protein belongs to the PanD family. In terms of assembly, heterooctamer of four alpha and four beta subunits. Pyruvate serves as cofactor. In terms of processing, is synthesized initially as an inactive proenzyme, which is activated by self-cleavage at a specific serine bond to produce a beta-subunit with a hydroxyl group at its C-terminus and an alpha-subunit with a pyruvoyl group at its N-terminus.

The protein localises to the cytoplasm. It catalyses the reaction L-aspartate + H(+) = beta-alanine + CO2. Its pathway is cofactor biosynthesis; (R)-pantothenate biosynthesis; beta-alanine from L-aspartate: step 1/1. Its function is as follows. Catalyzes the pyruvoyl-dependent decarboxylation of aspartate to produce beta-alanine. The polypeptide is Aspartate 1-decarboxylase (Anaeromyxobacter dehalogenans (strain 2CP-C)).